A 215-amino-acid chain; its full sequence is Probable ribosome-binding factor A, chloroplastic (215 aa).

A chloroplast-targeting transit peptide spans 1–52 (MPNLLHTNQSHFFFLHHPPIYTVSSKTQAFHFPQSMAPVNLRTNLSVRRTVR). Residues 183 to 192 (KGSGEGKTEP) are compositionally biased toward basic and acidic residues. Positions 183–210 (KGSGEGKTEPSDSTEDDQDWEVDDPDED) are disordered. Residues 194–210 (DSTEDDQDWEVDDPDED) show a composition bias toward acidic residues.

This sequence belongs to the RbfA family.

Its subcellular location is the plastid. The protein resides in the chloroplast. This chain is Probable ribosome-binding factor A, chloroplastic, found in Arabidopsis thaliana (Mouse-ear cress).